A 742-amino-acid chain; its full sequence is Photosystem I P700 chlorophyll a apoprotein A2 (742 aa).

8 consecutive transmembrane segments (helical) span residues 46–69, 135–158, 175–199, 273–291, 336–359, 375–401, 423–445, and 525–543; these read LFST…FHVA, LFQA…LHLQ, LNHH…HVAI, IAHH…GHMY, LHFQ…QHMG, SALY…IFFV, ALIS…IYVH, and FLVH…LILI. [4Fe-4S] cluster-binding residues include Cys567 and Cys576. The next 2 helical transmembrane spans lie at 583–604 and 651–673; these read AMYL…YWHW and LSPW…MFLI. Divinyl chlorophyll a contacts are provided by His662, Met670, and Tyr678. Position 679 (Trp679) interacts with phylloquinone. Residues 715–735 form a helical membrane-spanning segment; it reads LVGLAHFTIGNILTFGAFVIA.

Belongs to the PsaA/PsaB family. The PsaA/B heterodimer binds the P700 divinyl chlorophyll special pair and subsequent electron acceptors. PSI consists of a core antenna complex that captures photons, and an electron transfer chain that converts photonic excitation into a charge separation. The cyanobacterial PSI reaction center is composed of one copy each of PsaA,B,C,D,E,F,I,J,K,L,M and X, and forms trimeric complexes. PSI electron transfer chain: 5 divinyl chlorophyll a, 1 divinyl chlorophyll a', 2 phylloquinones and 3 4Fe-4S clusters. PSI core antenna: 90 divinyl chlorophyll a, 22 carotenoids, 3 phospholipids and 1 galactolipid. P700 is a divinyl chlorophyll a/divinyl chlorophyll a' dimer, A0 is one or more divinyl chlorophyll a, A1 is one or both phylloquinones and FX is a shared 4Fe-4S iron-sulfur center. is required as a cofactor.

The protein resides in the cellular thylakoid membrane. It carries out the reaction reduced [plastocyanin] + hnu + oxidized [2Fe-2S]-[ferredoxin] = oxidized [plastocyanin] + reduced [2Fe-2S]-[ferredoxin]. Functionally, psaA and PsaB bind P700, the primary electron donor of photosystem I (PSI), as well as the electron acceptors A0, A1 and FX. PSI is a plastocyanin/cytochrome c6-ferredoxin oxidoreductase, converting photonic excitation into a charge separation, which transfers an electron from the donor P700 chlorophyll pair to the spectroscopically characterized acceptors A0, A1, FX, FA and FB in turn. Oxidized P700 is reduced on the lumenal side of the thylakoid membrane by plastocyanin or cytochrome c6. The sequence is that of Photosystem I P700 chlorophyll a apoprotein A2 from Prochlorococcus marinus (strain MIT 9312).